Consider the following 176-residue polypeptide: Imidazoleglycerol-phosphate dehydratase (176 aa).

It belongs to the imidazoleglycerol-phosphate dehydratase family.

The protein resides in the cytoplasm. The catalysed reaction is D-erythro-1-(imidazol-4-yl)glycerol 3-phosphate = 3-(imidazol-4-yl)-2-oxopropyl phosphate + H2O. It participates in amino-acid biosynthesis; L-histidine biosynthesis; L-histidine from 5-phospho-alpha-D-ribose 1-diphosphate: step 6/9. This is Imidazoleglycerol-phosphate dehydratase from Pyrococcus furiosus (strain ATCC 43587 / DSM 3638 / JCM 8422 / Vc1).